The chain runs to 197 residues: 7-methyl-GTP pyrophosphatase (197 aa).

Asp-69 (proton acceptor) is an active-site residue.

The protein belongs to the Maf family. YceF subfamily. It depends on a divalent metal cation as a cofactor.

It localises to the cytoplasm. The catalysed reaction is N(7)-methyl-GTP + H2O = N(7)-methyl-GMP + diphosphate + H(+). Its function is as follows. Nucleoside triphosphate pyrophosphatase that hydrolyzes 7-methyl-GTP (m(7)GTP). May have a dual role in cell division arrest and in preventing the incorporation of modified nucleotides into cellular nucleic acids. The sequence is that of 7-methyl-GTP pyrophosphatase from Pectobacterium atrosepticum (strain SCRI 1043 / ATCC BAA-672) (Erwinia carotovora subsp. atroseptica).